We begin with the raw amino-acid sequence, 315 residues long: Homoserine kinase (315 aa).

Residue 96 to 106 (PHSRGLGSSAA) coordinates ATP.

It belongs to the GHMP kinase family. Homoserine kinase subfamily.

The protein localises to the cytoplasm. It carries out the reaction L-homoserine + ATP = O-phospho-L-homoserine + ADP + H(+). It participates in amino-acid biosynthesis; L-threonine biosynthesis; L-threonine from L-aspartate: step 4/5. In terms of biological role, catalyzes the ATP-dependent phosphorylation of L-homoserine to L-homoserine phosphate. The polypeptide is Homoserine kinase (Mycolicibacterium paratuberculosis (strain ATCC BAA-968 / K-10) (Mycobacterium paratuberculosis)).